A 234-amino-acid chain; its full sequence is 2,3-bisphosphoglycerate-dependent phosphoglycerate mutase (234 aa).

Substrate is bound by residues 8–15 (RHGESVWN), 21–22 (TG), Arg60, 87–90 (ERHY), Lys98, 114–115 (RR), and 183–184 (GN). Residue His9 is the Tele-phosphohistidine intermediate of the active site. The Proton donor/acceptor role is filled by Glu87.

It belongs to the phosphoglycerate mutase family. BPG-dependent PGAM subfamily. As to quaternary structure, homodimer.

The enzyme catalyses (2R)-2-phosphoglycerate = (2R)-3-phosphoglycerate. It functions in the pathway carbohydrate degradation; glycolysis; pyruvate from D-glyceraldehyde 3-phosphate: step 3/5. Catalyzes the interconversion of 2-phosphoglycerate and 3-phosphoglycerate. In Geobacter sp. (strain M21), this protein is 2,3-bisphosphoglycerate-dependent phosphoglycerate mutase.